The chain runs to 96 residues: RxLR effector protein PITG_11507 (96 aa).

The signal sequence occupies residues 1 to 19 (MRLSFIIVAVSLLAGGSGA). The interval 27–59 (SDVLTSRGTNEGARTGKRSLRYDSNVERTGEED) is disordered. Positions 44–59 (RSLRYDSNVERTGEED) match the RxLR-dEER motif. Basic and acidic residues predominate over residues 46-55 (LRYDSNVERT).

It belongs to the RxLR effector family.

It is found in the secreted. Its subcellular location is the host nucleus. It localises to the host cytoplasm. Functionally, effector that enhances P.infestans colonization of Nicotiana benthamiana leaves. The protein is RxLR effector protein PITG_11507 of Phytophthora infestans (strain T30-4) (Potato late blight agent).